We begin with the raw amino-acid sequence, 1057 residues long: Nuclear RNAi defective-3 protein (1057 aa).

2 disordered regions span residues 1–89 (MDLL…GLSV) and 344–388 (LTNS…ERTV). A compositionally biased stretch (low complexity) spans 17-30 (STAKKPATSASSTP). Basic and acidic residues-rich tracts occupy residues 67–81 (PKREHTDRTGPDPKR) and 356–388 (GGRERRDGGGNSRKYDDRRSPRDGEIDYDERTV). Residues 387–500 (TVSHYQRQFQ…YPMELMSILP (114 aa)) enclose the PAZ domain. The 325-residue stretch at 677–1001 (GIIAEKRPDM…LAKRGHNNYK (325 aa)) folds into the Piwi domain.

The protein resides in the cytoplasm. The protein localises to the nucleus. Transports small interfering RNAs (siRNAs) from the cytoplasm to the nucleus. Required for RNA interference (RNAi) in nuclei. Required for exogenous RNAi-induced H3K27 methylation. The polypeptide is Nuclear RNAi defective-3 protein (nrde-3) (Caenorhabditis elegans).